The sequence spans 258 residues: MKQLYWNICGEGDCDLVLLHGWGLNAGVWHCIIDRLTPHFRLHLVDLPGYGRSTEFGAMSLSEMAEIVLQQAPQQAIWLGWSMGGLVASQIALSHPERVRGLITVSSSPCFTAHDEWPGIRPEVLAGFQQQLSEDFQRTVERFLALQTLGTESARQDARLLKAVVLQHQMPEVAVLTGGLDILRTADLREELADCSLPFLRIYGYLDGLVPRKVAALLNSQWPHTQSVVMPGSAHAPFVSHPEAFSQLVVDFAQQSNT.

The region spanning 16–241 (LVLLHGWGLN…GSAHAPFVSH (226 aa)) is the AB hydrolase-1 domain. Substrate is bound by residues W22, 82–83 (SM), and 143–147 (FLALQ). S82 functions as the Nucleophile in the catalytic mechanism. Active-site residues include D207 and H235. H235 is a substrate binding site.

Belongs to the AB hydrolase superfamily. Carboxylesterase BioH family. Monomer.

The protein localises to the cytoplasm. It catalyses the reaction 6-carboxyhexanoyl-[ACP] methyl ester + H2O = 6-carboxyhexanoyl-[ACP] + methanol + H(+). Its pathway is cofactor biosynthesis; biotin biosynthesis. In terms of biological role, the physiological role of BioH is to remove the methyl group introduced by BioC when the pimeloyl moiety is complete. It allows to synthesize pimeloyl-ACP via the fatty acid synthetic pathway through the hydrolysis of the ester bonds of pimeloyl-ACP esters. This is Pimeloyl-[acyl-carrier protein] methyl ester esterase from Yersinia enterocolitica serotype O:8 / biotype 1B (strain NCTC 13174 / 8081).